The sequence spans 508 residues: TATA box-binding protein-like 1 (508 aa).

Disordered stretches follow at residues 145–190, 236–262, and 456–479; these read QISY…QMHH, EPIP…PMPD, and QKKR…FDDS.

It belongs to the TBP family.

The protein resides in the nucleus. Its function is as follows. May be a general transcription factor. Plays an essential role for RNA polymerase II/ama-1 transcription in early embryos whereby it activates a subset of RNA polymerase II promoters and facilitates the reestablishment of transcription after mitosis. The polypeptide is TATA box-binding protein-like 1 (Caenorhabditis elegans).